The primary structure comprises 358 residues: S-adenosylmethionine:tRNA ribosyltransferase-isomerase (358 aa).

The protein belongs to the QueA family. In terms of assembly, monomer.

It localises to the cytoplasm. It carries out the reaction 7-aminomethyl-7-carbaguanosine(34) in tRNA + S-adenosyl-L-methionine = epoxyqueuosine(34) in tRNA + adenine + L-methionine + 2 H(+). The protein operates within tRNA modification; tRNA-queuosine biosynthesis. Transfers and isomerizes the ribose moiety from AdoMet to the 7-aminomethyl group of 7-deazaguanine (preQ1-tRNA) to give epoxyqueuosine (oQ-tRNA). The protein is S-adenosylmethionine:tRNA ribosyltransferase-isomerase of Chelativorans sp. (strain BNC1).